A 450-amino-acid polypeptide reads, in one-letter code: MSDFSEELKGPVTDDEEVETSVLSGAGMHFPWLQTYVETVAIGGKRRKDFAQTTSACLSFIQEALLKHQWQQAAEYMYSYFQTLEDSDSYKRQAAPEIIWKLGSEILFYHPKSNMESFNTFANRMKNIGVMNYLKISLQHALYLLHHGMLKDAKRNLSEAETWRHGENTSSREILINLIQAYKGLLQYYTWSEKKMELSKLDKDDYAYNAVAQDVFNHSWKTSANISALIKIPGVWDPFVKSYVEMLEFYGDRDGAQEVLTNYAYDEKFPSNPNAHIYLYNFLKRQKAPRSKLISVLKILYQIVPSHKLMLEFHTLLRKSEKEEHRKLGLEVLFGVLDFAGCTKNITAWKYLAKYLKNILMGNHLAWVQEEWNSRKNWWPGFHFSYFWAKSDWKEDTALACEKAFVAGLLLGKGCRYFRYILKQDHQILGKKIKRMKRSVKKYSIVNPRL.

As to quaternary structure, component of the transcription factor SL1/TIF-IB complex, composed of TBP and at least TAF1A, TAF1B, TAF1C and TAF1D. In the complex interacts directly with TBP, TAF1A and TAF1B. Interaction of the SL1/TIF-IB subunits with TBP excludes interaction of TBP with the transcription factor IID (TFIID) subunits. Interacts with UBFT. Interacts with CEBPA (isoform 1 and isoform 4). Part of Pol I pre-initiation complex (PIC), in which Pol I core assembles with RRN3 and promoter-bound UTBF and SL1/TIF-IB complex.

The protein localises to the nucleus. The protein resides in the nucleolus. Functionally, component of the transcription factor SL1/TIF-IB complex, which is involved in the assembly of the PIC (pre-initiation complex) during RNA polymerase I-dependent transcription. The rate of PIC formation probably is primarily dependent on the rate of association of SL1/TIF-IB with the rDNA promoter. SL1/TIF-IB is involved in stabilization of nucleolar transcription factor 1/UBTF on rDNA. Formation of SL1/TIF-IB excludes the association of TBP with TFIID subunits. The polypeptide is TATA box-binding protein-associated factor RNA polymerase I subunit A (TAF1A) (Homo sapiens (Human)).